The following is a 275-amino-acid chain: MFTYIKEIEEAWQIKDKLLQDSVKLSAFKKTLQDVIENLNKGTIRVCEKQNSSWQVNDWVKKAILLYFMTTESQLYNNNYNSWYDKVAPKFPFDAELNKFKEAGIRKVPGSFVRTGTYIAKNVVIMPSFINIGAYIDEGTMIDTWATIGSCAQIGKNCHISGGTGIGGVLEPLQAKPVIIEDNCFIGARSEIAEGVIVEEGAVVSMGVFIGASTKIVYRDSGEIIYGIVPACSVVVPGVLPNKEADKPGLYCAVIVKQVDKNTRAKVSINELLRS.

The substrate site is built by Arg-106 and Asp-143.

The protein belongs to the transferase hexapeptide repeat family. As to quaternary structure, homotrimer.

It localises to the cytoplasm. It catalyses the reaction (S)-2,3,4,5-tetrahydrodipicolinate + succinyl-CoA + H2O = (S)-2-succinylamino-6-oxoheptanedioate + CoA. The protein operates within amino-acid biosynthesis; L-lysine biosynthesis via DAP pathway; LL-2,6-diaminopimelate from (S)-tetrahydrodipicolinate (succinylase route): step 1/3. This Rickettsia bellii (strain RML369-C) protein is 2,3,4,5-tetrahydropyridine-2,6-dicarboxylate N-succinyltransferase.